The sequence spans 143 residues: Ribosomal RNA large subunit methyltransferase H (143 aa).

S-adenosyl-L-methionine-binding positions include Gly-95 and Phe-111–Phe-116.

It belongs to the RNA methyltransferase RlmH family. As to quaternary structure, homodimer.

It is found in the cytoplasm. The catalysed reaction is pseudouridine(1915) in 23S rRNA + S-adenosyl-L-methionine = N(3)-methylpseudouridine(1915) in 23S rRNA + S-adenosyl-L-homocysteine + H(+). Functionally, specifically methylates the pseudouridine at position 1915 (m3Psi1915) in 23S rRNA. The protein is Ribosomal RNA large subunit methyltransferase H of Metamycoplasma arthritidis (strain 158L3-1) (Mycoplasma arthritidis).